The sequence spans 257 residues: Imidazole glycerol phosphate synthase subunit HisF (257 aa).

Residues Asp-11 and Asp-130 contribute to the active site.

The protein belongs to the HisA/HisF family. Heterodimer of HisH and HisF.

The protein localises to the cytoplasm. The catalysed reaction is 5-[(5-phospho-1-deoxy-D-ribulos-1-ylimino)methylamino]-1-(5-phospho-beta-D-ribosyl)imidazole-4-carboxamide + L-glutamine = D-erythro-1-(imidazol-4-yl)glycerol 3-phosphate + 5-amino-1-(5-phospho-beta-D-ribosyl)imidazole-4-carboxamide + L-glutamate + H(+). It functions in the pathway amino-acid biosynthesis; L-histidine biosynthesis; L-histidine from 5-phospho-alpha-D-ribose 1-diphosphate: step 5/9. In terms of biological role, IGPS catalyzes the conversion of PRFAR and glutamine to IGP, AICAR and glutamate. The HisF subunit catalyzes the cyclization activity that produces IGP and AICAR from PRFAR using the ammonia provided by the HisH subunit. In Actinobacillus succinogenes (strain ATCC 55618 / DSM 22257 / CCUG 43843 / 130Z), this protein is Imidazole glycerol phosphate synthase subunit HisF.